Consider the following 249-residue polypeptide: Pyridoxine 5'-phosphate synthase (249 aa).

A 3-amino-2-oxopropyl phosphate-binding site is contributed by asparagine 7. Residue 9–10 coordinates 1-deoxy-D-xylulose 5-phosphate; the sequence is DH. Arginine 18 is a binding site for 3-amino-2-oxopropyl phosphate. Histidine 43 (proton acceptor) is an active-site residue. 1-deoxy-D-xylulose 5-phosphate contacts are provided by arginine 45 and histidine 50. Glutamate 70 acts as the Proton acceptor in catalysis. Residue threonine 100 participates in 1-deoxy-D-xylulose 5-phosphate binding. Histidine 190 serves as the catalytic Proton donor. 3-amino-2-oxopropyl phosphate-binding positions include glycine 191 and 212–213; that span reads GH.

It belongs to the PNP synthase family. In terms of assembly, homooctamer; tetramer of dimers.

The protein localises to the cytoplasm. It carries out the reaction 3-amino-2-oxopropyl phosphate + 1-deoxy-D-xylulose 5-phosphate = pyridoxine 5'-phosphate + phosphate + 2 H2O + H(+). It participates in cofactor biosynthesis; pyridoxine 5'-phosphate biosynthesis; pyridoxine 5'-phosphate from D-erythrose 4-phosphate: step 5/5. Functionally, catalyzes the complicated ring closure reaction between the two acyclic compounds 1-deoxy-D-xylulose-5-phosphate (DXP) and 3-amino-2-oxopropyl phosphate (1-amino-acetone-3-phosphate or AAP) to form pyridoxine 5'-phosphate (PNP) and inorganic phosphate. This is Pyridoxine 5'-phosphate synthase from Synechococcus sp. (strain CC9902).